The following is a 285-amino-acid chain: MSVTLSRKLIDYVKLAKPKVVSLLDVVAIASYILAFKGNWYNLIPVLIGGSIAAGGSMIINGGLEIEKDKVMKRTSWRPTVKGEVGRKEAYMVGGIACALGSLIGLLANPLTAFFILLGSLVYVFVYSYYLKPRTWLNIVIGGFAGSAAAWAGYAAASNSFNLESLLLGLLVFAWTPGHFWALALRYKRDYANAEIPMLPAIVDDKTAARAIAISNILMIPFALGLMLYLNLIYVIITLAATAVLLYFNVRLMRNPTPEESWISYKFSAPYLAIVMIAAVISFIL.

Transmembrane regions (helical) follow at residues 16–36 (AKPK…ILAF), 40–60 (WYNL…SMII), 106–126 (LLAN…YVFV), 136–156 (WLNI…GYAA), 165–185 (SLLL…ALAL), 217–237 (ILMI…YVII), and 265–285 (YKFS…SFIL).

This sequence belongs to the UbiA prenyltransferase family. Protoheme IX farnesyltransferase subfamily.

It is found in the cell membrane. The enzyme catalyses heme b + (2E,6E)-farnesyl diphosphate + H2O = Fe(II)-heme o + diphosphate. It functions in the pathway porphyrin-containing compound metabolism; heme O biosynthesis; heme O from protoheme: step 1/1. In terms of biological role, converts heme B (protoheme IX) to heme O by substitution of the vinyl group on carbon 2 of heme B porphyrin ring with a hydroxyethyl farnesyl side group. In Sulfolobus acidocaldarius (strain ATCC 33909 / DSM 639 / JCM 8929 / NBRC 15157 / NCIMB 11770), this protein is Protoheme IX farnesyltransferase.